Consider the following 282-residue polypeptide: BTB/POZ domain-containing protein At3g56230 (282 aa).

A compositionally biased stretch (basic and acidic residues) spans Gly-40–Asn-50. The disordered stretch occupies residues Gly-40–Leu-66. Residues His-51–Ser-64 are compositionally biased toward low complexity. Residues Ala-111–Lys-181 enclose the BTB domain.

It functions in the pathway protein modification; protein ubiquitination. May act as a substrate-specific adapter of an E3 ubiquitin-protein ligase complex (CUL3-RBX1-BTB) which mediates the ubiquitination and subsequent proteasomal degradation of target proteins. This Arabidopsis thaliana (Mouse-ear cress) protein is BTB/POZ domain-containing protein At3g56230.